The chain runs to 340 residues: 2-deoxy-scyllo-inosamine dehydrogenase (340 aa).

Cysteine 37, histidine 59, cysteine 89, cysteine 92, cysteine 95, cysteine 103, and glutamate 144 together coordinate Zn(2+).

Belongs to the zinc-containing alcohol dehydrogenase family. DOIA dehydrogenase subfamily. Requires Zn(2+) as cofactor.

It catalyses the reaction 2-deoxy-scyllo-inosamine + NADP(+) = 3-amino-2,3-dideoxy-scyllo-inosose + NADPH + H(+). The enzyme catalyses 2-deoxy-scyllo-inosamine + NAD(+) = 3-amino-2,3-dideoxy-scyllo-inosose + NADH + H(+). It functions in the pathway metabolic intermediate biosynthesis; 2-deoxystreptamine biosynthesis; 2-deoxystreptamine from D-glucose 6-phosphate: step 3/4. It participates in antibiotic biosynthesis; neomycin biosynthesis. In terms of biological role, catalyzes the oxidation of 2-deoxy-scyllo-inosamine (DOIA) with NAD(+) or NADP(+), forming 3-amino-2,3-dideoxy-scyllo-inosose (amino-DOI). The polypeptide is 2-deoxy-scyllo-inosamine dehydrogenase (neoA) (Streptomyces fradiae (Streptomyces roseoflavus)).